An 872-amino-acid chain; its full sequence is Alanine--tRNA ligase (872 aa).

Positions 567, 571, 669, and 673 each coordinate Zn(2+).

The protein belongs to the class-II aminoacyl-tRNA synthetase family. Zn(2+) serves as cofactor.

The protein resides in the cytoplasm. It carries out the reaction tRNA(Ala) + L-alanine + ATP = L-alanyl-tRNA(Ala) + AMP + diphosphate. Functionally, catalyzes the attachment of alanine to tRNA(Ala) in a two-step reaction: alanine is first activated by ATP to form Ala-AMP and then transferred to the acceptor end of tRNA(Ala). Also edits incorrectly charged Ser-tRNA(Ala) and Gly-tRNA(Ala) via its editing domain. The protein is Alanine--tRNA ligase of Streptococcus pneumoniae serotype 2 (strain D39 / NCTC 7466).